Consider the following 259-residue polypeptide: Phosphatidylglycerol--prolipoprotein diacylglyceryl transferase (259 aa).

4 consecutive transmembrane segments (helical) span residues 12-32 (LAIH…VYLA), 41-61 (ISSD…IVGA), 80-100 (IIAI…GALV), and 109-129 (VLNP…AQAI). Arg131 is a binding site for a 1,2-diacyl-sn-glycero-3-phospho-(1'-sn-glycerol). 3 helical membrane-spanning segments follow: residues 167 to 187 (IPTF…IMMW), 194 to 214 (LLDG…RLVI), and 226 to 246 (GIRI…IFVI).

This sequence belongs to the Lgt family.

It localises to the cell membrane. The enzyme catalyses L-cysteinyl-[prolipoprotein] + a 1,2-diacyl-sn-glycero-3-phospho-(1'-sn-glycerol) = an S-1,2-diacyl-sn-glyceryl-L-cysteinyl-[prolipoprotein] + sn-glycerol 1-phosphate + H(+). It functions in the pathway protein modification; lipoprotein biosynthesis (diacylglyceryl transfer). Catalyzes the transfer of the diacylglyceryl group from phosphatidylglycerol to the sulfhydryl group of the N-terminal cysteine of a prolipoprotein, the first step in the formation of mature lipoproteins. In Streptococcus pyogenes serotype M49 (strain NZ131), this protein is Phosphatidylglycerol--prolipoprotein diacylglyceryl transferase.